Here is a 266-residue protein sequence, read N- to C-terminus: Putative carbamate hydrolase RutD (266 aa).

The AB hydrolase-1 domain occupies 14–116 (PVVVLISGLG…VLVSVNGWLR (103 aa)).

It belongs to the AB hydrolase superfamily. Hydrolase RutD family.

It catalyses the reaction carbamate + 2 H(+) = NH4(+) + CO2. Functionally, involved in pyrimidine catabolism. May facilitate the hydrolysis of carbamate, a reaction that can also occur spontaneously. The protein is Putative carbamate hydrolase RutD of Escherichia coli O81 (strain ED1a).